The sequence spans 601 residues: Elongation factor 4 (601 aa).

Residues aspartate 2–threonine 184 form the tr-type G domain. GTP contacts are provided by residues aspartate 14 to threonine 19 and asparagine 131 to aspartate 134.

It belongs to the TRAFAC class translation factor GTPase superfamily. Classic translation factor GTPase family. LepA subfamily.

Its subcellular location is the cell inner membrane. It carries out the reaction GTP + H2O = GDP + phosphate + H(+). Functionally, required for accurate and efficient protein synthesis under certain stress conditions. May act as a fidelity factor of the translation reaction, by catalyzing a one-codon backward translocation of tRNAs on improperly translocated ribosomes. Back-translocation proceeds from a post-translocation (POST) complex to a pre-translocation (PRE) complex, thus giving elongation factor G a second chance to translocate the tRNAs correctly. Binds to ribosomes in a GTP-dependent manner. This chain is Elongation factor 4, found in Polynucleobacter necessarius subsp. necessarius (strain STIR1).